Reading from the N-terminus, the 375-residue chain is Succinyl-diaminopimelate desuccinylase (375 aa).

Residue histidine 66 participates in Zn(2+) binding. Aspartate 68 is a catalytic residue. Residue aspartate 99 coordinates Zn(2+). The active-site Proton acceptor is the glutamate 133. Zn(2+) is bound by residues glutamate 134, glutamate 162, and histidine 348.

Belongs to the peptidase M20A family. DapE subfamily. As to quaternary structure, homodimer. Zn(2+) serves as cofactor. The cofactor is Co(2+).

The catalysed reaction is N-succinyl-(2S,6S)-2,6-diaminopimelate + H2O = (2S,6S)-2,6-diaminopimelate + succinate. The protein operates within amino-acid biosynthesis; L-lysine biosynthesis via DAP pathway; LL-2,6-diaminopimelate from (S)-tetrahydrodipicolinate (succinylase route): step 3/3. Functionally, catalyzes the hydrolysis of N-succinyl-L,L-diaminopimelic acid (SDAP), forming succinate and LL-2,6-diaminopimelate (DAP), an intermediate involved in the bacterial biosynthesis of lysine and meso-diaminopimelic acid, an essential component of bacterial cell walls. The chain is Succinyl-diaminopimelate desuccinylase from Buchnera aphidicola subsp. Acyrthosiphon pisum (strain 5A).